A 189-amino-acid chain; its full sequence is Large ribosomal subunit protein bL17 (189 aa).

Positions 136-189 (KAAPAAEEEVVETEEAPAVEAEAAESEEAPAAEAEAAEAEAAETEEAPAAEDKK) are disordered. Over residues 141–189 (AEEEVVETEEAPAVEAEAAESEEAPAAEAEAAEAEAAETEEAPAAEDKK) the composition is skewed to acidic residues.

The protein belongs to the bacterial ribosomal protein bL17 family. Part of the 50S ribosomal subunit. Contacts protein L32.

This is Large ribosomal subunit protein bL17 from Paenarthrobacter aurescens (strain TC1).